We begin with the raw amino-acid sequence, 448 residues long: Phosphoglucosamine mutase (448 aa).

Ser100 (phosphoserine intermediate) is an active-site residue. Ser100, Asp240, Asp242, and Asp244 together coordinate Mg(2+). Ser100 bears the Phosphoserine mark.

It belongs to the phosphohexose mutase family. Mg(2+) serves as cofactor. In terms of processing, activated by phosphorylation.

It carries out the reaction alpha-D-glucosamine 1-phosphate = D-glucosamine 6-phosphate. Catalyzes the conversion of glucosamine-6-phosphate to glucosamine-1-phosphate. The polypeptide is Phosphoglucosamine mutase (Bacillus licheniformis (strain ATCC 14580 / DSM 13 / JCM 2505 / CCUG 7422 / NBRC 12200 / NCIMB 9375 / NCTC 10341 / NRRL NRS-1264 / Gibson 46)).